The sequence spans 512 residues: Probable metalloreductase AIM14 (512 aa).

7 helical membrane-spanning segments follow: residues 20–40, 61–81, 97–117, 132–152, 161–181, 191–211, and 218–235; these read IKYG…ILIC, PLFI…VFHV, MSYA…SIGL, VIIA…ILEG, LWNF…IISL, YFYV…CLHA, and YAIA…ERYA. The Ferric oxidoreductase domain occupies 94-206; it reads FGRMSYALLP…NITVWLFVGL (113 aa). In terms of domain architecture, FAD-binding FR-type spans 230–355; it reads IFERYAKSHS…GGSGISFALP (126 aa). Over residues 427–436 the composition is skewed to low complexity; it reads ESLPSSETPS. Residues 427–451 are disordered; sequence ESLPSSETPSRTVNDDSLSQDTRPK. The segment covering 437–447 has biased composition (polar residues); it reads RTVNDDSLSQD.

This sequence belongs to the ferric reductase (FRE) family. AIM14 subfamily.

It localises to the membrane. In terms of biological role, probable cell surface metalloreductase. May be involved in iron or copper homeostasis. In Debaryomyces hansenii (strain ATCC 36239 / CBS 767 / BCRC 21394 / JCM 1990 / NBRC 0083 / IGC 2968) (Yeast), this protein is Probable metalloreductase AIM14 (AIM14).